The chain runs to 120 residues: MNAQDIIRSIEAEQMKTDLPVIYVGDRVRVGVKIKEGDKERVQPYEGDVIAMRNTGINRTITVRRVFQGVGVERVFLLHSPRIDSIKVIQRGKVRRAKLYYLRDRMGKASRIKPRFDRPL.

Belongs to the bacterial ribosomal protein bL19 family.

Its function is as follows. This protein is located at the 30S-50S ribosomal subunit interface and may play a role in the structure and function of the aminoacyl-tRNA binding site. This is Large ribosomal subunit protein bL19 from Thermosynechococcus vestitus (strain NIES-2133 / IAM M-273 / BP-1).